The primary structure comprises 398 residues: Phosphoglycerate kinase (398 aa).

Residues 21-23 (DFN), Arg-36, 59-62 (HLGR), Arg-119, and Arg-157 each bind substrate. ATP is bound by residues Lys-208, Gly-296, Glu-327, and 354–357 (GGDS).

The protein belongs to the phosphoglycerate kinase family. In terms of assembly, monomer.

It localises to the cytoplasm. It catalyses the reaction (2R)-3-phosphoglycerate + ATP = (2R)-3-phospho-glyceroyl phosphate + ADP. It functions in the pathway carbohydrate degradation; glycolysis; pyruvate from D-glyceraldehyde 3-phosphate: step 2/5. In Streptococcus pneumoniae (strain 70585), this protein is Phosphoglycerate kinase.